The primary structure comprises 78 residues: Acyl carrier protein (78 aa).

Residues 2 to 77 form the Carrier domain; it reads SDIEQRVKQA…SAIDYVTKKL (76 aa). O-(pantetheine 4'-phosphoryl)serine is present on Ser-37.

It belongs to the acyl carrier protein (ACP) family. In terms of processing, 4'-phosphopantetheine is transferred from CoA to a specific serine of apo-ACP by AcpS. This modification is essential for activity because fatty acids are bound in thioester linkage to the sulfhydryl of the prosthetic group.

The protein localises to the cytoplasm. Its pathway is lipid metabolism; fatty acid biosynthesis. In terms of biological role, carrier of the growing fatty acid chain in fatty acid biosynthesis. The chain is Acyl carrier protein from Acinetobacter baylyi (strain ATCC 33305 / BD413 / ADP1).